An 84-amino-acid polypeptide reads, in one-letter code: Exodeoxyribonuclease 7 small subunit (84 aa).

The protein belongs to the XseB family. As to quaternary structure, heterooligomer composed of large and small subunits.

It localises to the cytoplasm. The catalysed reaction is Exonucleolytic cleavage in either 5'- to 3'- or 3'- to 5'-direction to yield nucleoside 5'-phosphates.. In terms of biological role, bidirectionally degrades single-stranded DNA into large acid-insoluble oligonucleotides, which are then degraded further into small acid-soluble oligonucleotides. This Yersinia pseudotuberculosis serotype O:1b (strain IP 31758) protein is Exodeoxyribonuclease 7 small subunit.